Here is a 393-residue protein sequence, read N- to C-terminus: PGA synthase CapB (393 aa).

The cofactor is Mn(2+).

Functionally, catalyzes the biosynthesis of PGA (gamma-polyglutamic acid) from L-glutamate. Both the 44-kDa and the 33-kDa forms are required for PGA synthesis. This Bacillus subtilis (strain 168) protein is PGA synthase CapB (capB).